The sequence spans 254 residues: Type III pantothenate kinase (254 aa).

6 to 13 (DVGNTNTV) contributes to the ATP binding site. Substrate-binding positions include Y100 and 107-110 (GADR). D109 serves as the catalytic Proton acceptor. D129 is a binding site for K(+). T132 contributes to the ATP binding site. Residue T184 participates in substrate binding.

This sequence belongs to the type III pantothenate kinase family. In terms of assembly, homodimer. Requires NH4(+) as cofactor. K(+) is required as a cofactor.

The protein resides in the cytoplasm. It catalyses the reaction (R)-pantothenate + ATP = (R)-4'-phosphopantothenate + ADP + H(+). It participates in cofactor biosynthesis; coenzyme A biosynthesis; CoA from (R)-pantothenate: step 1/5. In terms of biological role, catalyzes the phosphorylation of pantothenate (Pan), the first step in CoA biosynthesis. The polypeptide is Type III pantothenate kinase (Anaeromyxobacter sp. (strain Fw109-5)).